The following is a 526-amino-acid chain: Amino acid transporter AVT1E (526 aa).

Positions 1-49 (MKQNETFDQEREDLYHTFDEEDEESQTESSVPSTPLSRNRSEDVPVPWP) are disordered. A compositionally biased stretch (basic and acidic residues) spans 8–18 (DQEREDLYHTF). 11 consecutive transmembrane segments (helical) span residues 140–160 (SVLN…PYAV), 165–185 (WLGL…GILL), 212–232 (ILVS…YIIM), 253–273 (LDST…TVWL), 278–298 (LLSY…LCLF), 320–340 (IPVA…FPNI), 353–373 (VLLI…VCGF), 397–417 (IAVW…ITPV), 436–456 (GVSM…ALTV), 458–478 (FFAT…ALIF), and 494–514 (FQIG…CCGT).

The protein belongs to the amino acid/polyamine transporter 2 family. Amino acid/auxin permease (AAAP) (TC 2.A.18.5) subfamily.

The protein resides in the membrane. In Arabidopsis thaliana (Mouse-ear cress), this protein is Amino acid transporter AVT1E.